The sequence spans 324 residues: Polycomb complex protein BMI-1-B (324 aa).

The RING-type zinc finger occupies 18-57 (CVLCGGYFIDATTIVECLHSFCKMCIVRYLETSKYCPICD). The Nuclear localization signal signature appears at 81 to 95 (KLVPGLFKNEMKRRR). Positions 232-324 (IKLSSPRNDM…TSHNGSNSLG (93 aa)) are disordered. Low complexity predominate over residues 256-279 (DKPNSPSIVAAPSTSSSMPSPNTP). Polar residues-rich tracts occupy residues 280–295 (VQSTHPSFPHISTING) and 303–324 (NGQTPFSSKVCKTSHNGSNSLG).

Component of a PRC1-like complex. Homodimer. Interacts with cbx2.

The protein localises to the nucleus. Functionally, component of a Polycomb group (PcG) multiprotein PRC1-like complex, a complex class required to maintain the transcriptionally repressive state of many genes, including Hox genes, throughout development. PcG PRC1 complex acts via chromatin remodeling and modification of histones; it mediates monoubiquitination of histone H2A 'Lys-119', rendering chromatin heritably changed in its expressibility. In the PRC1 complex, it is required to stimulate the E3 ubiquitin-protein ligase activity of rnf2. The sequence is that of Polycomb complex protein BMI-1-B (bmi1b) from Danio rerio (Zebrafish).